A 135-amino-acid polypeptide reads, in one-letter code: Large-conductance mechanosensitive channel (135 aa).

Transmembrane regions (helical) follow at residues 10–30 and 76–96; these read FAMR…GAFG and GSFI…FCVI.

Belongs to the MscL family. As to quaternary structure, homopentamer.

Its subcellular location is the cell inner membrane. Its function is as follows. Channel that opens in response to stretch forces in the membrane lipid bilayer. May participate in the regulation of osmotic pressure changes within the cell. The sequence is that of Large-conductance mechanosensitive channel from Campylobacter concisus (strain 13826).